We begin with the raw amino-acid sequence, 204 residues long: MNAQPLRVGIGGPVGSGKTALTLALCLALRERYNLAVVTNDIYTREDADFLVRNEALAPERIIGVETGGCPHTAIREDASINLEAVDQLNRRFPGLDLILVESGGDNLSATFSPELSDLTIYVIDVSAGDKLPRKGGPGICKSDLLVINKIDLAPLVGASLEMMNSDTQRMRGGKPFVFSNQKTGQGLADIIAFIERQGLLTAA.

GTP is bound at residue 12 to 19 (GPVGSGKT).

The protein belongs to the SIMIBI class G3E GTPase family. UreG subfamily. As to quaternary structure, homodimer. UreD, UreF and UreG form a complex that acts as a GTP-hydrolysis-dependent molecular chaperone, activating the urease apoprotein by helping to assemble the nickel containing metallocenter of UreC. The UreE protein probably delivers the nickel.

Its subcellular location is the cytoplasm. Facilitates the functional incorporation of the urease nickel metallocenter. This process requires GTP hydrolysis, probably effectuated by UreG. This chain is Urease accessory protein UreG, found in Pseudomonas fluorescens (strain ATCC BAA-477 / NRRL B-23932 / Pf-5).